Reading from the N-terminus, the 419-residue chain is L-rhamnose isomerase (419 aa).

H262, D294, and D296 together coordinate Mn(2+).

This sequence belongs to the rhamnose isomerase family. As to quaternary structure, homotetramer. Requires Mn(2+) as cofactor.

It is found in the cytoplasm. The enzyme catalyses L-rhamnopyranose = L-rhamnulose. It functions in the pathway carbohydrate degradation; L-rhamnose degradation; glycerone phosphate from L-rhamnose: step 1/3. In terms of biological role, catalyzes the interconversion of L-rhamnose and L-rhamnulose. The protein is L-rhamnose isomerase of Shigella sonnei (strain Ss046).